A 2968-amino-acid chain; its full sequence is Trinucleotide repeat-containing gene 18 protein (2968 aa).

Disordered stretches follow at residues 1 to 24 (MDGRDFGPQRSVHGPPPPLLSGLA) and 139 to 261 (GSPL…LAER). Residues 139 to 150 (GSPLLSQLGQPS) are compositionally biased toward low complexity. 2 stretches are compositionally biased toward basic and acidic residues: residues 221 to 233 (GKKDPRARGEEAS) and 243 to 260 (QEARAEGRQDRGPPRLAE). Ser-263 bears the Phosphoserine mark. Basic and acidic residues predominate over residues 304 to 322 (GAKEAARQDEGARLLRRTE). Disordered stretches follow at residues 304–356 (GAKE…PAGV) and 381–488 (FDER…PAAQ). A compositionally biased stretch (pro residues) spans 327–351 (GPRPCPSPLPPPPAPPKGPPAPPAA). Basic and acidic residues-rich tracts occupy residues 395-405 (RDARAREREAG), 419-431 (PLDRPEGLREKNS), and 464-479 (ELLKPEADPRPCERAP). Ser-611 carries the post-translational modification Phosphoserine. Disordered regions lie at residues 612-679 (PFGG…EVRH), 941-1002 (EHRA…SPVA), 1019-1055 (PAYAYPATPSSHPTSPPPASPPPTPGITRKEEAPENV), 1106-1190 (DADG…MATP), 1212-1236 (SCAEPSECPDFVEGPEPRVDSPGRT), 1279-1306 (LAQVAPSESQPTLEMSDCDVPAGEGQCP), 1497-1566 (KQRE…SDDY), and 1687-1855 (SLKS…RERA). Lys-620 participates in a covalent cross-link: Glycyl lysine isopeptide (Lys-Gly) (interchain with G-Cter in SUMO2). Composition is skewed to basic and acidic residues over residues 651 to 660 (LKRDPERPES) and 941 to 955 (EHRAEMEEKGSKRGL). Residues 916-949 (LQQQAAQALELQRSAQLVQERLKAQEHRAEMEEK) adopt a coiled-coil conformation. Composition is skewed to low complexity over residues 966-983 (AGPGLLPRKPPGLAAGPA) and 1019-1031 (PAYAYPATPSSHP). Positions 1032 to 1043 (TSPPPASPPPTP) are enriched in pro residues. A compositionally biased stretch (basic and acidic residues) spans 1046 to 1055 (TRKEEAPENV). A phosphoserine mark is found at Ser-1127 and Ser-1136. A compositionally biased stretch (basic and acidic residues) spans 1142–1162 (EPLREGPEEEPLAEREVKAEV). Residues 1171–1181 (ELPPLESPLPL) show a composition bias toward pro residues. Positions 1481 to 1516 (LDFRMRLAEVQRQYKEKQRELVKLQRRRDSEDRREE) form a coiled coil. A compositionally biased stretch (basic and acidic residues) spans 1497-1519 (KQRELVKLQRRRDSEDRREEPHR). Residues 1520–1534 (SLARRGPGRPRKRTH) are compositionally biased toward basic residues. Ser-1540 is modified (phosphoserine). Residues 1549 to 1563 (GHSSGKLSSKSLLTS) are compositionally biased toward low complexity. The span at 1816 to 1842 (SSEESFDQDESSEEEDEEEELEEEDEA) shows a compositional bias: acidic residues. Phosphoserine is present on residues Ser-1857 and Ser-1863. Disordered stretches follow at residues 1912 to 2148 (YTDS…LTPA) and 2295 to 2771 (LLVP…RLPS). Composition is skewed to basic and acidic residues over residues 1957-1968 (SPDKAKLAVEKG) and 1993-2004 (LWTRRRSERIFL). A compositionally biased stretch (low complexity) spans 2007–2024 (ASAAAPAPVSTAPATKTS). Residues 2034-2046 (PRKDAGRAKDRKD) show a composition bias toward basic and acidic residues. A compositionally biased stretch (low complexity) spans 2069 to 2085 (ALPSEARAPHASSLTAA). Residues 2093 to 2103 (KGKEVKKENRG) are compositionally biased toward basic and acidic residues. Phosphothreonine is present on Thr-2146. Over residues 2307-2316 (TSKDTGEGKD) the composition is skewed to basic and acidic residues. Basic residues predominate over residues 2329–2338 (ARGRGRKPSA). A compositionally biased stretch (low complexity) spans 2365–2374 (EPSSTPGSKK). A compositionally biased stretch (basic and acidic residues) spans 2375 to 2384 (SPPEPVDKRA). The segment covering 2390 to 2401 (RPAPPQPSPAPP) has biased composition (pro residues). The span at 2411 to 2433 (PFAELPAPATSLAPAPLITMPAT) shows a compositional bias: low complexity. Basic and acidic residues-rich tracts occupy residues 2441–2468 (RAAEESGAKGPRRPGEEAELLVKLDHEG) and 2477–2487 (AKEALLLREDP). Composition is skewed to low complexity over residues 2559–2580 (SSSSSSSGSSSSSSSSSSSGSE) and 2603–2671 (SAAS…SSSS). Positions 2673 to 2685 (TDEDSSCSSDDEA) are enriched in acidic residues. A compositionally biased stretch (pro residues) spans 2723–2736 (APQPQAPPPQPTQP). Phosphoserine is present on Ser-2771. The region spanning 2817-2962 (EMIRIGDCAV…PTTGMIFSTD (146 aa)) is the BAH domain.

This chain is Trinucleotide repeat-containing gene 18 protein, found in Homo sapiens (Human).